The primary structure comprises 118 residues: Large ribosomal subunit protein uL18 (118 aa).

It belongs to the universal ribosomal protein uL18 family. In terms of assembly, part of the 50S ribosomal subunit; part of the 5S rRNA/L5/L18/L25 subcomplex. Contacts the 5S and 23S rRNAs.

Functionally, this is one of the proteins that bind and probably mediate the attachment of the 5S RNA into the large ribosomal subunit, where it forms part of the central protuberance. The chain is Large ribosomal subunit protein uL18 from Nitrosospira multiformis (strain ATCC 25196 / NCIMB 11849 / C 71).